The sequence spans 131 residues: Small ribosomal subunit protein uS8 (131 aa).

The segment at 1 to 27 is disordered; it reads MSMTDPVADMLTRIRNGQRASKNEVSM.

It belongs to the universal ribosomal protein uS8 family. Part of the 30S ribosomal subunit. Contacts proteins S5 and S12.

Functionally, one of the primary rRNA binding proteins, it binds directly to 16S rRNA central domain where it helps coordinate assembly of the platform of the 30S subunit. This chain is Small ribosomal subunit protein uS8, found in Thioalkalivibrio sulfidiphilus (strain HL-EbGR7).